The primary structure comprises 1522 residues: Rho guanine nucleotide exchange factor 11 (1522 aa).

The segment at 1 to 40 is disordered; sequence MSVRLPQSIDRLSSLSSLGDSAPERKSPSHHRQPSDASET. Phosphoserine occurs at positions 2, 14, 16, and 35. One can recognise a PDZ domain in the interval 47–126; that stretch reads CVIIQKDQHG…LTLLGSSPSS (80 aa). Disordered regions lie at residues 128–175 and 200–231; these read GISG…PEVQ and YGDT…ERFP. Over residues 149 to 161 the composition is skewed to pro residues; that stretch reads PSPPPPPPLPPPQ. Phosphoserine occurs at positions 245 and 251. Thr-254 bears the Phosphothreonine mark. Ser-255 and Ser-271 each carry phosphoserine. The disordered stretch occupies residues 263–286; it reads AQHHRRQGSDAAVPSTGDQGVDQS. One can recognise an RGSL domain in the interval 306-486; the sequence is ESDIIFQDLE…NTYMSHAGIR (181 aa). A coiled-coil region spans residues 444-470; sequence LRERQVAEKQLAALGDILSKYEEDRSA. A disordered region spans residues 490–555; it reads ARPSNTAEKA…SSQSTFHIPL (66 aa). Basic and acidic residues predominate over residues 521-533; that stretch reads SKKEKDALEDKKR. A phosphoserine mark is found at Ser-556, Ser-635, and Ser-663. Positions 573 to 680 are disordered; it reads ENNQQYDAPE…FTPKMGRRSI (108 aa). Basic and acidic residues predominate over residues 601-637; it reads DSSRSEIRLGRSESLKGREEMKRSRKAENVPRSRSDV. Low complexity predominate over residues 651-664; that stretch reads SASSSTSSLSTRSL. Residues Thr-668 and Thr-672 each carry the phosphothreonine modification. The DH domain occupies 734–923; sequence DRQEVINELF…REILKYVNEA (190 aa). In terms of domain architecture, PH spans 965–1079; it reads KMIHEGPLTW…WMELLEEAVR (115 aa). The tract at residues 1084 to 1141 is disordered; it reads HPGAAPMPVHPPPPGPREPAQQGPTPSRVELDDSDVFHGEPEPEELPGGTGSQQRVQG. The segment covering 1091–1100 has biased composition (pro residues); it reads PVHPPPPGPR. Over residues 1112–1124 the composition is skewed to basic and acidic residues; it reads VELDDSDVFHGEP. Position 1155 is a phosphoserine (Ser-1155). Disordered regions lie at residues 1223–1320, 1332–1423, and 1453–1522; these read ETQA…AGGY, KVVP…RDVG, and LGGE…SPGP. Polar residues predominate over residues 1236-1245; it reads PTPSVISVTS. Phosphoserine occurs at positions 1295 and 1300. Over residues 1338 to 1353 the composition is skewed to low complexity; the sequence is PESGQSEPGPPEVEGG. Phosphoserine is present on residues Ser-1457 and Ser-1458. Residues Thr-1462 and Thr-1475 each carry the phosphothreonine modification. Phosphoserine is present on Ser-1480. A compositionally biased stretch (acidic residues) spans 1503–1513; that stretch reads DGSDAPLEDST.

As to quaternary structure, interacts with GNA12 and GNA13 through the RGS domain. Interacts with RHOA, PLXNB1 and PLXNB2. Interacts with SLC1A6. Interacts (via DH domain) with GCSAM (via C-terminus). Found in a complex with ARHGEF11 and ARHGEF12; binding to ARHGEF11 and ARHGEF12 enhances CDC42 GEF activity of PLEKHG4B, and PLEKHG4B, in turn, inhibits ARHGEF11- and ARHGEF12-mediated RHOA activation. Post-translationally, phosphorylated by MAP kinase p38 (MAPK11, MAPK12, MAPK13 and/or MAPK14). Ubiquitinated by the BCR(KLHL20) E3 ubiquitin ligase complex when previously phosphorylated by MAP kinase p38 (MAPK11, MAPK12, MAPK13 and/or MAPK14), leading to its degradation, thereby restricting RhoA activity and facilitating growth cone spreading and neurite outgrowth. Ubiquitously expressed.

The protein resides in the cytoplasm. It is found in the membrane. In terms of biological role, may play a role in the regulation of RhoA GTPase by guanine nucleotide-binding alpha-12 (GNA12) and alpha-13 (GNA13). Acts as guanine nucleotide exchange factor (GEF) for RhoA GTPase and may act as GTPase-activating protein (GAP) for GNA12 and GNA13. Involved in neurotrophin-induced neurite outgrowth. The polypeptide is Rho guanine nucleotide exchange factor 11 (ARHGEF11) (Homo sapiens (Human)).